Reading from the N-terminus, the 322-residue chain is Pantothenate kinase (322 aa).

An ATP-binding site is contributed by 104–111; the sequence is GSVAVGKS.

It belongs to the prokaryotic pantothenate kinase family.

It is found in the cytoplasm. It carries out the reaction (R)-pantothenate + ATP = (R)-4'-phosphopantothenate + ADP + H(+). It participates in cofactor biosynthesis; coenzyme A biosynthesis; CoA from (R)-pantothenate: step 1/5. In Leifsonia xyli subsp. xyli (strain CTCB07), this protein is Pantothenate kinase.